The chain runs to 576 residues: Catalase-peroxidase (576 aa).

Positions 95 to 224 (WHAAGSYRAA…LAAVQMGLIY (130 aa)) form a cross-link, tryptophyl-tyrosyl-methioninium (Trp-Tyr) (with M-250). Catalysis depends on His96, which acts as the Proton acceptor. Residues 224–250 (YVNPEGVNGQPDPARTALHIRETFARM) constitute a cross-link (tryptophyl-tyrosyl-methioninium (Tyr-Met) (with W-95)). His265 is a heme b binding site.

The protein belongs to the peroxidase family. Peroxidase/catalase subfamily. As to quaternary structure, homotetramer. It depends on heme b as a cofactor. Post-translationally, formation of the three residue Trp-Tyr-Met cross-link is important for the catalase, but not the peroxidase activity of the enzyme.

The catalysed reaction is H2O2 + AH2 = A + 2 H2O. It carries out the reaction 2 H2O2 = O2 + 2 H2O. In terms of biological role, bifunctional enzyme with both catalase and broad-spectrum peroxidase activity. Also displays NADH oxidase, INH lyase and isonicotinoyl-NAD synthase activities. Important for stationary phase survival. The chain is Catalase-peroxidase (katG) from Rhodobacter capsulatus (Rhodopseudomonas capsulata).